The primary structure comprises 82 residues: Small ribosomal subunit protein bS18 (82 aa).

This sequence belongs to the bacterial ribosomal protein bS18 family. Part of the 30S ribosomal subunit. Forms a tight heterodimer with protein bS6.

Its function is as follows. Binds as a heterodimer with protein bS6 to the central domain of the 16S rRNA, where it helps stabilize the platform of the 30S subunit. This chain is Small ribosomal subunit protein bS18, found in Methylobacterium nodulans (strain LMG 21967 / CNCM I-2342 / ORS 2060).